Reading from the N-terminus, the 468-residue chain is O-methyltransferase lcsG (468 aa).

Residues 1–12 (MGDNVQSDTTAA) show a composition bias toward polar residues. The disordered stretch occupies residues 1 to 29 (MGDNVQSDTTAAQAGITDAPTAPTSAPVS). Residues 298–299 (GG), aspartate 321, 348–349 (DF), and lysine 363 contribute to the S-adenosyl-L-methionine site.

The protein belongs to the class I-like SAM-binding methyltransferase superfamily. Cation-independent O-methyltransferase family.

The protein operates within secondary metabolite biosynthesis. O-methyltransferase; part of the gene cluster that mediates the biosynthesis of the lipopeptide antibiotics leucinostatins that show extensive biological activities, including antimalarial, antiviral, antibacterial, antifungal, and antitumor activities, as well as phytotoxic. Leucinostatin A contains nine amino acid residues, including the unusual amino acid 4-methyl-L-proline (MePro), 2-amino-6-hydroxy-4-methyl-8-oxodecanoic acid (AHyMeOA), 3-hydroxyleucine (HyLeu), alpha-aminoisobutyric acid (AIB), beta-Ala, a 4-methylhex-2-enoic acid at the N-terminus as well as a N1,N1-dimethylpropane-1,2-diamine (DPD) at the C-terminus. The biosynthesis of leucinostatins is probably initiated with the assembly of 4-methylhex-2-enoic acid by a reducing PKS. Two reducing polyketide synthases, lcsB and lcsC, have been identified in the cluster and it is not clear which is the one that assembles 4-methylhex-2-enoic acid since both contain KS, AT, DH, cMT, ER, KR and ACP domains. The polyketide residue might be transferred to the NRPS lcsA, mediated by two additional enzymes, the acyl-CoA ligase lcsD and the thioesterase lcsE. The linear polyketide carboxylic acid, which is released from PKS, is converted to a CoA thioester by lcsD, and then lcsE hydrolyzes the thiol bond and shuttles the polyketide intermediate to lcsA. The C domain of the first module catalyzed the condensation of 4-methylhex-2-enoic acid and MePro carried by domain A1, followed by successive condensations of nine amino acids to trigger the elongation of the linear peptide. A5 and A6 domains of lcsA are proposed to incorporate leucine, A2 AHyMeOA, and A3 incorporates HyLeu. A4, A7 and A8 incorporate AIB. The AHyMeOA in leucinostatin A activated by the A2 might be produced by the second PKS (lcsB or lcsC) present within the cluster. The MePro is probably produced via leucine cyclization and may originate from a separate pathway, independent of the cluster. Another nonproteinogenic amino acid, beta-Ala, could be produced by an aspartic acid decarboxylase also localized outside of the cluster. Two candidates are VFPBJ_01400 and VFPBJ_10476. The final peptide scaffold may be released by the NAD(P)H-dependent thioester reductase (TE) at the C-terminal region of lcsA. Transamination of the lcsA product by the transaminase lcsP may produce DPD at the C-terminus. Further hydroxylation steps performed alternatively by the cytochrome P450 monooxygenases lcsI, lcsK and lcsN then yield the non-methylated leucinostatins precursor. It is also possible that leucines can be hydroxylated prior to their incorporation into the peptide. Varying extents of methylation then lead to the formation of leucinostatins A and B. This is O-methyltransferase lcsG from Purpureocillium lilacinum (Paecilomyces lilacinus).